The following is a 667-amino-acid chain: Protein MAIN-LIKE 2 (667 aa).

Met1 is modified (N-acetylmethionine). The segment covering Met492–Lys508 has biased composition (basic residues). Disordered regions lie at residues Met492 to Ser523 and Lys594 to Ala667. Residues Pro512 to Ser523 show a composition bias toward acidic residues. 2 stretches are compositionally biased toward basic and acidic residues: residues Tyr608–Lys618 and Ser656–Ala667.

Expressed in root tips, the shoot apical meristem (SAM), leaves, mature flowers and embryos.

It is found in the nucleus. In terms of biological role, maybe required to maintain cell division activity in meristematic cells. The sequence is that of Protein MAIN-LIKE 2 from Arabidopsis thaliana (Mouse-ear cress).